We begin with the raw amino-acid sequence, 171 residues long: MGIVEKKEGGLERNRALFNSEGSCEGAKCGKEASMHTKHESEESFSGEKLTEAAARGRTEVVTELLELGTNPNAVNRFGRSAIQVMMMGNVRLAAILLQYGAEPNTPDPTTLTLPVHDAAREGFLDTLMLLHRAGARLDVRDSWGRLPVDLAEEQGHHLVVAYLREVVRDA.

The segment covering 33–42 (ASMHTKHESE) has biased composition (basic and acidic residues). Residues 33–52 (ASMHTKHESEESFSGEKLTE) are disordered. ANK repeat units lie at residues 45–74 (FSGEKLTEAAARGRTEVVTELLELGTNPNA), 78–106 (FGRSAIQVMMMGNVRLAAILLQYGAEPNT), and 111–140 (TLTLPVHDAAREGFLDTLMLLHRAGARLDV).

The protein belongs to the CDKN2 cyclin-dependent kinase inhibitor family. In terms of assembly, heterodimer with CDK4 or CDK6. Predominamt P16 complexes contained CDK6. Interacts with CDK4 (both 'T-172'-phosphorylated and non-phosphorylated forms); the interaction inhibits cyclin D-CDK4 kinase activity. Interacts with ISCO2. As to expression, expressed predominantly in lung and testis. In the testis, restricted to germ cells in the seminiferous epithelium. Not detected in premeiotic spermatogonia but high levels found in postmeiotic spermatids. In primary tumors, low levels detected in melanocytic hyperplasias. Higher levels found in non-metastatic and metastatic melanomas.

The protein resides in the cytoplasm. Its subcellular location is the nucleus. Its function is as follows. Acts as a negative regulator of the proliferation of normal cells by interacting strongly with CDK4 and CDK6. This inhibits their ability to interact with cyclins D and to phosphorylate the retinoblastoma protein. This is Cyclin-dependent kinase inhibitor 2A from Monodelphis domestica (Gray short-tailed opossum).